We begin with the raw amino-acid sequence, 555 residues long: Formate--tetrahydrofolate ligase (555 aa).

Residue 65–72 (TPAGEGKS) participates in ATP binding.

Belongs to the formate--tetrahydrofolate ligase family.

It carries out the reaction (6S)-5,6,7,8-tetrahydrofolate + formate + ATP = (6R)-10-formyltetrahydrofolate + ADP + phosphate. It functions in the pathway one-carbon metabolism; tetrahydrofolate interconversion. This chain is Formate--tetrahydrofolate ligase, found in Staphylococcus aureus (strain NCTC 8325 / PS 47).